We begin with the raw amino-acid sequence, 214 residues long: Large ribosomal subunit protein uL3 (214 aa).

The interval 119 to 159 is disordered; that stretch reads GVKRHGFAGGPKTHGQSDRHRAPGSIGPTTDPGRVHKGKRM.

This sequence belongs to the universal ribosomal protein uL3 family. In terms of assembly, part of the 50S ribosomal subunit. Forms a cluster with proteins L14 and L19.

Its function is as follows. One of the primary rRNA binding proteins, it binds directly near the 3'-end of the 23S rRNA, where it nucleates assembly of the 50S subunit. This Thermomicrobium roseum (strain ATCC 27502 / DSM 5159 / P-2) protein is Large ribosomal subunit protein uL3.